The primary structure comprises 477 residues: Penton protein (477 aa).

The protein belongs to the adenoviridae penton family. In terms of assembly, interacts with the fiber protein (via N-terminal tail region). Interacts with the capsid vertex protein; this interaction binds the penton base to neighboring peripentonal hexons.

Its subcellular location is the virion. The protein localises to the host nucleus. Major capsid protein that self-associates to form penton base pentamers, each in the shape of a pentagon, situated at the 12 vertices of the pseudo T=25 capsid. Involved in virus secondary attachment to host cell after initial attachment by the fiber protein, and in endocytosis of virions. As the virus enters the host cell, penton proteins are shed concomitant with virion acidification in the endosome. This Canis lupus familiaris (Dog) protein is Penton protein.